The primary structure comprises 436 residues: MAKIVKVIGREIIDSRGNPTVEAEVHLEGGFVGLAAAPSGASTGSREALELRDGDKSRFLGKGVLKAVAAVNNEIAQAIVGKDATNQAEIDQIMIDLDGTENKSNFGANAILAVSLANAKAAAASKGLPLYAYIAELNGTAGVYSMPLPMMNIINGGEHADNNVDIQEFMIQPVGAKTLREALRIGAEVFHNLAKVLKAKGMSTAVGDEGGFAPNLASNADALACIKEAVEKAGYVLGKDVTLAMDCASSEFYNKENGMYEMKGEGKSFTSQEFTHYLEELCKEYPIVSIEDGQDESDWEGFAYQTKVLGDRVQLVGDDLFVTNTKILKEGIEKGIANSILIKFNQIGSLTETLAAIKMAKDAGYTAVISHRSGETEDATIADLAVGTAAGQIKTGSMSRSDRIAKYNQLIRIEEALERAGTPAAFPGLKAVKGQA.

(2R)-2-phosphoglycerate is bound at residue Gln-167. Glu-209 acts as the Proton donor in catalysis. Mg(2+) contacts are provided by Asp-246, Glu-291, and Asp-318. 4 residues coordinate (2R)-2-phosphoglycerate: Lys-343, Arg-372, Ser-373, and Lys-394. The active-site Proton acceptor is the Lys-343.

Belongs to the enolase family. Component of the RNA degradosome, a multiprotein complex involved in RNA processing and mRNA degradation. Mg(2+) is required as a cofactor.

The protein resides in the cytoplasm. It localises to the secreted. Its subcellular location is the cell surface. The catalysed reaction is (2R)-2-phosphoglycerate = phosphoenolpyruvate + H2O. The protein operates within carbohydrate degradation; glycolysis; pyruvate from D-glyceraldehyde 3-phosphate: step 4/5. Its function is as follows. Catalyzes the reversible conversion of 2-phosphoglycerate (2-PG) into phosphoenolpyruvate (PEP). It is essential for the degradation of carbohydrates via glycolysis. The protein is Enolase of Haemophilus influenzae (strain PittGG).